Reading from the N-terminus, the 303-residue chain is Diaminopimelate epimerase (303 aa).

Substrate is bound by residues asparagine 15, glutamine 47, and asparagine 67. Catalysis depends on cysteine 76, which acts as the Proton donor. Substrate is bound by residues 77-78, asparagine 163, asparagine 197, and 215-216; these read GN and ER. Catalysis depends on cysteine 224, which acts as the Proton acceptor. 225–226 provides a ligand contact to substrate; it reads GS. A disordered region spans residues 278 to 303; that stretch reads FDPATGEWSRDTQGLQGSGNADRGAA.

Belongs to the diaminopimelate epimerase family. As to quaternary structure, homodimer.

Its subcellular location is the cytoplasm. It carries out the reaction (2S,6S)-2,6-diaminopimelate = meso-2,6-diaminopimelate. Its pathway is amino-acid biosynthesis; L-lysine biosynthesis via DAP pathway; DL-2,6-diaminopimelate from LL-2,6-diaminopimelate: step 1/1. Its function is as follows. Catalyzes the stereoinversion of LL-2,6-diaminopimelate (L,L-DAP) to meso-diaminopimelate (meso-DAP), a precursor of L-lysine and an essential component of the bacterial peptidoglycan. This Brucella abortus (strain S19) protein is Diaminopimelate epimerase.